A 507-amino-acid chain; its full sequence is Glycerol kinase (507 aa).

Position 12 (threonine 12) interacts with ADP. Threonine 12, threonine 13, and serine 14 together coordinate ATP. Residue threonine 12 coordinates sn-glycerol 3-phosphate. Arginine 16 is an ADP binding site. Arginine 82, glutamate 83, tyrosine 134, and aspartate 250 together coordinate sn-glycerol 3-phosphate. The glycerol site is built by arginine 82, glutamate 83, tyrosine 134, aspartate 250, and glutamine 251. ADP contacts are provided by threonine 272 and glycine 316. The ATP site is built by threonine 272, glycine 316, glutamine 320, and glycine 417. Positions 417 and 421 each coordinate ADP.

The protein belongs to the FGGY kinase family.

It catalyses the reaction glycerol + ATP = sn-glycerol 3-phosphate + ADP + H(+). Its pathway is polyol metabolism; glycerol degradation via glycerol kinase pathway; sn-glycerol 3-phosphate from glycerol: step 1/1. Inhibited by fructose 1,6-bisphosphate (FBP). In terms of biological role, key enzyme in the regulation of glycerol uptake and metabolism. Catalyzes the phosphorylation of glycerol to yield sn-glycerol 3-phosphate. This is Glycerol kinase from Beijerinckia indica subsp. indica (strain ATCC 9039 / DSM 1715 / NCIMB 8712).